A 470-amino-acid polypeptide reads, in one-letter code: Dihydrolipoyl dehydrogenase (470 aa).

FAD-binding positions include 39–47 (EKATLGGVC), Lys-56, and Ala-119. Cys-47 and Cys-52 are joined by a disulfide. NAD(+)-binding positions include 183–187 (GGGYI), Glu-206, and 272–275 (TVGR). 2 residues coordinate FAD: Asp-315 and Ala-323. Residue His-447 is the Proton acceptor of the active site.

Belongs to the class-I pyridine nucleotide-disulfide oxidoreductase family. In terms of assembly, homodimer. Component of two multienzyme complexes: pyruvate dehydrogenase complex and oxoglutarate dehydrogenase complex. Requires FAD as cofactor.

It is found in the cytoplasm. The enzyme catalyses N(6)-[(R)-dihydrolipoyl]-L-lysyl-[protein] + NAD(+) = N(6)-[(R)-lipoyl]-L-lysyl-[protein] + NADH + H(+). Catalyzes the oxidation of dihydrolipoamide to lipoamide. In Bacillus subtilis (strain 168), this protein is Dihydrolipoyl dehydrogenase (pdhD).